Here is a 505-residue protein sequence, read N- to C-terminus: Alkylglycerol monooxygenase (505 aa).

The next 2 membrane-spanning stretches (helical) occupy residues 56–76 and 104–124; these read VSAW…ISGH and AVAI…ELPW. Residues 130–262 enclose the Fatty acid hydroxylase domain; it reads WIFCLFFQDF…FIIWDKMFNT (133 aa). The Histidine box-1 motif lies at 145–149; it reads HRAVH. The Histidine box-2 signature appears at 158-162; sequence HTIHH. The short motif at 234 to 238 is the Histidine box-3 element; that stretch reads HRVHH. 4 helical membrane-spanning segments follow: residues 366-386, 396-416, 430-450, and 452-472; these read ILVK…FFHF, LDCT…GAFF, CCGV…AGTH, and LFVI…VLVE.

Belongs to the sterol desaturase family. TMEM195 subfamily. It depends on Fe cation as a cofactor.

The protein localises to the endoplasmic reticulum membrane. It carries out the reaction 1-O-(1,2-saturated-alkyl)-sn-glycerol + (6R)-L-erythro-5,6,7,8-tetrahydrobiopterin + O2 = a 1-(1-hydroxyalkyl)-sn-glycerol + (6R)-L-erythro-6,7-dihydrobiopterin + H2O. Glyceryl-ether monooxygenase that cleaves the O-alkyl bond of ether lipids. This chain is Alkylglycerol monooxygenase, found in Caenorhabditis elegans.